A 66-amino-acid polypeptide reads, in one-letter code: Phylloseptin-H5 (66 aa).

The N-terminal stretch at 1-22 is a signal peptide; it reads MAFLKKSLFLVLFLGLVSLSIC. Positions 23–44 are excised as a propeptide; sequence EEEKRETEEEENEQEDDDKSEE. The disordered stretch occupies residues 24 to 44; that stretch reads EEKRETEEEENEQEDDDKSEE. Residues 30–41 are compositionally biased toward acidic residues; the sequence is EEEENEQEDDDK. Residue Phe-65 is modified to Phenylalanine amide.

Expressed by the skin glands.

Its subcellular location is the secreted. Functionally, has antibacterial activity against the Gram-negative bacteria E.coli and P.aeruginosa, and the Gram-positive bacterium S.aureus. No hemolytic activity. The sequence is that of Phylloseptin-H5 (psn7) from Pithecopus hypochondrialis (Orange-legged leaf frog).